A 134-amino-acid polypeptide reads, in one-letter code: DNA polymerase III subunit psi (134 aa).

Belongs to the DNA polymerase III psi/HolD chain family. As to quaternary structure, DNA polymerase III contains a core (composed of alpha, epsilon and theta chains) that associates with a tau subunit. This core dimerizes to form the POLIII' complex. PolIII' associates with the gamma complex (composed of gamma, delta, delta', psi and chi chains) and with the beta chain to form the complete DNA polymerase III complex. Interacts directly with the chi subunit (holC).

It catalyses the reaction DNA(n) + a 2'-deoxyribonucleoside 5'-triphosphate = DNA(n+1) + diphosphate. Part of the beta sliding clamp loading complex, which hydrolyzes ATP to load the beta clamp onto primed DNA to form the DNA replication pre-initiation complex. DNA polymerase III is a complex, multichain enzyme responsible for most of the replicative synthesis in bacteria. This DNA polymerase also exhibits 3' to 5' exonuclease activity. In Haemophilus influenzae (strain ATCC 51907 / DSM 11121 / KW20 / Rd), this protein is DNA polymerase III subunit psi (holD).